A 197-amino-acid chain; its full sequence is 7-methyl-GTP pyrophosphatase (197 aa).

Residue Asp73 is the Proton acceptor of the active site.

This sequence belongs to the Maf family. YceF subfamily. It depends on a divalent metal cation as a cofactor.

It localises to the cytoplasm. The catalysed reaction is N(7)-methyl-GTP + H2O = N(7)-methyl-GMP + diphosphate + H(+). In terms of biological role, nucleoside triphosphate pyrophosphatase that hydrolyzes 7-methyl-GTP (m(7)GTP). May have a dual role in cell division arrest and in preventing the incorporation of modified nucleotides into cellular nucleic acids. This Alcanivorax borkumensis (strain ATCC 700651 / DSM 11573 / NCIMB 13689 / SK2) protein is 7-methyl-GTP pyrophosphatase.